A 382-amino-acid chain; its full sequence is D-alanine--D-alanine ligase (382 aa).

An ATP-grasp domain is found at 161-372 (KVVFESAGLH…YAELIDELIH (212 aa)). 193 to 248 (VDRLGFPVFVKPARAGSSMGISKVDSLEGLDAAIEEARRHDLKLVIEAGIVGREIE) provides a ligand contact to ATP. 3 residues coordinate Mg(2+): Asp326, Glu339, and Asn341.

It belongs to the D-alanine--D-alanine ligase family. Mg(2+) is required as a cofactor. It depends on Mn(2+) as a cofactor.

The protein localises to the cytoplasm. The enzyme catalyses 2 D-alanine + ATP = D-alanyl-D-alanine + ADP + phosphate + H(+). Its pathway is cell wall biogenesis; peptidoglycan biosynthesis. Cell wall formation. The sequence is that of D-alanine--D-alanine ligase from Pseudarthrobacter chlorophenolicus (strain ATCC 700700 / DSM 12829 / CIP 107037 / JCM 12360 / KCTC 9906 / NCIMB 13794 / A6) (Arthrobacter chlorophenolicus).